We begin with the raw amino-acid sequence, 353 residues long: UPF0283 membrane protein YcjF (353 aa).

The span at 1–19 shows a compositional bias: basic and acidic residues; the sequence is MSEPLKPRIDFAEPLKEEP. The interval 1-35 is disordered; that stretch reads MSEPLKPRIDFAEPLKEEPTSAFKAQQTFSEAESR. 3 helical membrane-spanning segments follow: residues 70–90, 100–120, and 213–233; these read MVMGGLALFGASVVGQGLQWT, VALGGCAAGALIIGAGVGSVV, and ESTLMIAVSPLALVDMAFIAW.

It belongs to the UPF0283 family.

It localises to the cell inner membrane. The chain is UPF0283 membrane protein YcjF from Salmonella choleraesuis (strain SC-B67).